A 212-amino-acid chain; its full sequence is HTH-type transcriptional regulator RutR (212 aa).

The region spanning 17–77 (SAKKKAILSA…AVLRQILDIW (61 aa)) is the HTH tetR-type domain. The H-T-H motif DNA-binding region spans 39–58 (TRLEQIAELAGVSKTNLLYY).

In terms of assembly, homodimer.

In terms of biological role, master transcription regulator which represses the degradation of pyrimidines (rutABCDEFG) and purines (gcl operon) for maintenance of metabolic balance between pyrimidines and purines. It also regulates the synthesis of pyrimidine nucleotides and arginine from glutamine (carAB) and the supply of glutamate (gadABWX). This chain is HTH-type transcriptional regulator RutR (rutR), found in Escherichia coli O157:H7.